Here is a 274-residue protein sequence, read N- to C-terminus: Transcriptional activator PerA (274 aa).

One can recognise an HTH araC/xylS-type domain in the interval 168-265; sequence DRVIKVIELD…NTTPKKYNGV (98 aa). 2 consecutive DNA-binding regions (H-T-H motif) follow at residues 185–206 and 232–255; these read GDVS…NKEN and IDEI…KEYY.

Could help in the transcriptional activator of eaeA expression in enteropathogenic E.coli. However, it seems that it is PerC which acts as an activator. The polypeptide is Transcriptional activator PerA (perA) (Escherichia coli O127:H6 (strain E2348/69 / EPEC)).